The following is a 96-amino-acid chain: Accessory cholera enterotoxin (96 aa).

Residues 76–96 form a helical membrane-spanning segment; the sequence is QALAIVLQALMTRFALRALNL.

The protein localises to the secreted. It is found in the host cell membrane. Functionally, increases short-circuit current in rabbit ileal tissue mounted in Ussing chambers, by increasing the potential difference. Cultures of V.cholerae containing the cloned ace gene cause fluid secretion in ligated rabbit ileal loops. The sequence is that of Accessory cholera enterotoxin (ace) from Vibrio cholerae serotype O1 (strain ATCC 39315 / El Tor Inaba N16961).